A 342-amino-acid chain; its full sequence is MTNSLFRQSFLSDTLNMQQSVEAKATTLSNGVRLQLHQRGVLEVIPANNSAETKNIILSSGIHGDETAPMELIDKIVHDIETGFQDVQARCLFIIAHPEATNAHTRFIEENLNRLFDEKEHQPSKELVIADQLKLLVKAFFDNTPVESRWHLDLHCAIRASKHYSFAISPKTRHPTRSKALVDFVNHSHVEALLLSNSPSSTFSWFSAEYYSAQALTMELGRVARIGENDLSRFTALDLTMRDLIAEVTPEHLPKPAITYRVSRTIVRLHQDFDFRFDDQVENFTSFMHGEVFGHDGDKPLMAKNDNEAIVFPNRNVAIGQRAALMVCEIKARFEDDQLVYD.

His63, Glu66, and His155 together coordinate Zn(2+). Glu219 is an active-site residue.

It belongs to the AspA/AstE family. Succinylglutamate desuccinylase subfamily. The cofactor is Zn(2+).

The catalysed reaction is N-succinyl-L-glutamate + H2O = L-glutamate + succinate. Its pathway is amino-acid degradation; L-arginine degradation via AST pathway; L-glutamate and succinate from L-arginine: step 5/5. Transforms N(2)-succinylglutamate into succinate and glutamate. This is Succinylglutamate desuccinylase from Vibrio vulnificus (strain YJ016).